Reading from the N-terminus, the 230-residue chain is MTTLTARPEAITFDPQQTALIVVDMQNAYATPGGYLDLAGFDVSTTRPVIANIQTAVTAARAAGMLIIWFQNGWDEQYVEAGGPGSPNYHKSNALKTMRNQPLLQGKLLTKGSWDYQLVDELMPQPGDIVLPKPRYSGFFNTPLDSILRSRGIRHLVFTGIATNVCVESTLRDGFFLEYFGVVLEDATHQAGPEFAQKAALFNIETFFGWVSDVETFCDALSSTSFARIA.

Aspartate 24 functions as the Proton acceptor in the catalytic mechanism. Lysine 133 is an active-site residue. Cysteine 166 functions as the Nucleophile in the catalytic mechanism.

This sequence belongs to the isochorismatase family. RutB subfamily.

It carries out the reaction (Z)-3-ureidoacrylate + H2O + H(+) = (Z)-3-aminoacrylate + NH4(+) + CO2. The enzyme catalyses (Z)-3-ureidoacrylate + H2O = (Z)-3-aminoacrylate + carbamate + H(+). The catalysed reaction is (Z)-2-methylureidoacrylate + H2O + H(+) = (Z)-2-methylaminoacrylate + NH4(+) + CO2. In terms of biological role, hydrolyzes ureidoacrylate to form aminoacrylate and carbamate. The carbamate hydrolyzes spontaneously, thereby releasing one of the nitrogen atoms of the pyrimidine ring as ammonia and one of its carbon atoms as CO2. The sequence is that of Ureidoacrylate amidohydrolase RutB from Escherichia coli O127:H6 (strain E2348/69 / EPEC).